We begin with the raw amino-acid sequence, 411 residues long: LL-diaminopimelate aminotransferase (411 aa).

Substrate contacts are provided by tyrosine 15 and glycine 42. Residues tyrosine 72, 108–109, tyrosine 132, asparagine 187, tyrosine 218, and 246–248 each bind pyridoxal 5'-phosphate; these read SK and SFS. Substrate is bound by residues lysine 109, tyrosine 132, and asparagine 187. Lysine 249 carries the post-translational modification N6-(pyridoxal phosphate)lysine. Pyridoxal 5'-phosphate is bound by residues arginine 257 and asparagine 292. Substrate is bound by residues asparagine 292 and arginine 388.

It belongs to the class-I pyridoxal-phosphate-dependent aminotransferase family. LL-diaminopimelate aminotransferase subfamily. Homodimer. The cofactor is pyridoxal 5'-phosphate.

The enzyme catalyses (2S,6S)-2,6-diaminopimelate + 2-oxoglutarate = (S)-2,3,4,5-tetrahydrodipicolinate + L-glutamate + H2O + H(+). Its pathway is amino-acid biosynthesis; L-lysine biosynthesis via DAP pathway; LL-2,6-diaminopimelate from (S)-tetrahydrodipicolinate (aminotransferase route): step 1/1. Its function is as follows. Involved in the synthesis of meso-diaminopimelate (m-DAP or DL-DAP), required for both lysine and peptidoglycan biosynthesis. Catalyzes the direct conversion of tetrahydrodipicolinate to LL-diaminopimelate. The protein is LL-diaminopimelate aminotransferase of Geobacter sp. (strain M21).